Here is a 355-residue protein sequence, read N- to C-terminus: Phosphate acyltransferase (355 aa).

It belongs to the PlsX family. Homodimer. Probably interacts with PlsY.

It is found in the cytoplasm. It catalyses the reaction a fatty acyl-[ACP] + phosphate = an acyl phosphate + holo-[ACP]. The protein operates within lipid metabolism; phospholipid metabolism. Catalyzes the reversible formation of acyl-phosphate (acyl-PO(4)) from acyl-[acyl-carrier-protein] (acyl-ACP). This enzyme utilizes acyl-ACP as fatty acyl donor, but not acyl-CoA. This Azorhizobium caulinodans (strain ATCC 43989 / DSM 5975 / JCM 20966 / LMG 6465 / NBRC 14845 / NCIMB 13405 / ORS 571) protein is Phosphate acyltransferase.